The primary structure comprises 145 residues: MSTGTPHYAADRSKSRKSNNNRSIPFRTPTTQKVVKTSIRLGPVNPPTPTRNTQGGHGFSAEFLEYRRRRQERHTVRLAKLPNETLIIGGANPFDARNVPEAIKKFRDLVDEKIGDKVHKKDANKSKIVFREEEEETQNGTITID.

The segment at 1 to 59 (MSTGTPHYAADRSKSRKSNNNRSIPFRTPTTQKVVKTSIRLGPVNPPTPTRNTQGGHGF) is disordered.

This is an uncharacterized protein from Caenorhabditis elegans.